A 177-amino-acid polypeptide reads, in one-letter code: Protein ParB (177 aa).

The first 26 residues, 1–26, serve as a signal peptide directing secretion; that stretch reads MKRRSYAMLRAAAALAVLVVASPAWA. Residues 27–157 form the TNase-like domain; it reads ELRGEVVRII…RGKRVGLWSD (131 aa). Catalysis depends on residues Arg-53, Glu-61, and Arg-95.

In terms of assembly, monomer. Ca(2+) is required as a cofactor. Post-translationally, the N-terminus is blocked.

It is found in the secreted. Its activity is regulated as follows. Endonuclease activity is inhibited by EDTA. In terms of biological role, involved in plasmid partition. An endonuclease that acts on supercoiled dsDNA, converting it first to open circular DNA and then linearizing it. Preferentially cleaves regions in dsDNA that are capable of forming ssDNA, such as AT-rich regions and sequences that can form cruciforms. Has poor endonucleolytic activity on linear DNA, has 5'-3' exonuclease activity on dsDNA cleaving generating 3'-phosphonucleotides. This Escherichia coli protein is Protein ParB.